A 95-amino-acid polypeptide reads, in one-letter code: MSRSSKKGPYVDVRLLGRIEELNRANEKRVLRTWSRDSTIFPQMVGHTIAVHDGRRHVPVYITENMVGHKLGEFAPTRLFRGHGGKKVDKRGKMK.

This sequence belongs to the universal ribosomal protein uS19 family.

Its function is as follows. Protein S19 forms a complex with S13 that binds strongly to the 16S ribosomal RNA. In Roseiflexus castenholzii (strain DSM 13941 / HLO8), this protein is Small ribosomal subunit protein uS19.